Here is a 497-residue protein sequence, read N- to C-terminus: Glycerol kinase (497 aa).

Residue threonine 11 coordinates ADP. ATP is bound by residues threonine 11, serine 12, and serine 13. Threonine 11 is a sn-glycerol 3-phosphate binding site. Arginine 15 provides a ligand contact to ADP. Arginine 81, glutamate 82, tyrosine 133, and aspartate 242 together coordinate sn-glycerol 3-phosphate. Glycerol is bound by residues arginine 81, glutamate 82, tyrosine 133, aspartate 242, and glutamine 243. ADP contacts are provided by threonine 264 and glycine 307. 4 residues coordinate ATP: threonine 264, glycine 307, glutamine 311, and glycine 412. Residues glycine 412 and asparagine 416 each coordinate ADP.

This sequence belongs to the FGGY kinase family.

The catalysed reaction is glycerol + ATP = sn-glycerol 3-phosphate + ADP + H(+). It functions in the pathway polyol metabolism; glycerol degradation via glycerol kinase pathway; sn-glycerol 3-phosphate from glycerol: step 1/1. With respect to regulation, inhibited by fructose 1,6-bisphosphate (FBP). Its function is as follows. Key enzyme in the regulation of glycerol uptake and metabolism. Catalyzes the phosphorylation of glycerol to yield sn-glycerol 3-phosphate. The chain is Glycerol kinase from Polaromonas naphthalenivorans (strain CJ2).